The chain runs to 155 residues: Interleukin-2 (155 aa).

Residues 1–20 (MYKMQLLSCIALTLVLVANS) form the signal peptide. O-linked (GalNAc...) threonine glycosylation is present at Thr23. Cys79 and Cys127 are oxidised to a cystine.

The protein belongs to the IL-2 family.

It localises to the secreted. Cytokine produced by activated CD4-positive helper T-cells and to a lesser extend activated CD8-positive T-cells and natural killer (NK) cells that plays pivotal roles in the immune response and tolerance. Binds to a receptor complex composed of either the high-affinity trimeric IL-2R (IL2RA/CD25, IL2RB/CD122 and IL2RG/CD132) or the low-affinity dimeric IL-2R (IL2RB and IL2RG). Interaction with the receptor leads to oligomerization and conformation changes in the IL-2R subunits resulting in downstream signaling starting with phosphorylation of JAK1 and JAK3. In turn, JAK1 and JAK3 phosphorylate the receptor to form a docking site leading to the phosphorylation of several substrates including STAT5. This process leads to activation of several pathways including STAT, phosphoinositide-3-kinase/PI3K and mitogen-activated protein kinase/MAPK pathways. Functions as a T-cell growth factor and can increase NK-cell cytolytic activity as well. Promotes strong proliferation of activated B-cells and subsequently immunoglobulin production. Plays a pivotal role in regulating the adaptive immune system by controlling the survival and proliferation of regulatory T-cells, which are required for the maintenance of immune tolerance. Moreover, participates in the differentiation and homeostasis of effector T-cell subsets, including Th1, Th2, Th17 as well as memory CD8-positive T-cells. The chain is Interleukin-2 (IL2) from Halichoerus grypus (Gray seal).